The chain runs to 876 residues: MAIASQYNAKKVEDKWYDYWMKNNYFHSEVDDREPYTIVIPPPNVTGVLHMGHMLNNTIQDVLVRRARLKGLNACWVPGTDHASIATEAKVVAKLKAEGIDKNDLTREEFLQHAWEWTHKHGGIILQQLKHLGASCDWERTKFTMDDDMSASVIKVFVDLYEKGLVYRGYRMVNWDPQAKTTLSDEEVNYEERNGKLYHLKYKIDGTEDYLTIATTRPETILGDTAICINPNDERFTHLKGKKAIVPICNRTIPIIEDEYVDMEFGTGCLKVTPAHDENDKNLGDKHDLDVIDIFNDDATLNNYGLHYEGKDRFVVRAEIVEELELYGFLDKVEDHINKVGTSERTGAVIEPKLSDQWFLKMKEMAQPAIKAVLGDDINLVPEKFLNTYRHWMENVRDWNISRQLWWGHQIPAYFYGKGKNDFVVAETLNQAVLKAREVTGNAELQASDLTQDKDALDTWFSSWLWPMSVFNGILEPENKEIEYYYPTNDLVTAPEILFFWVARMIMAGYEYRGERPFKNVYLTGIVRDKQRRKMSKSLGNSPDPLGLIEQYGADGVRVGMLLSSPAGNDLMFDEDLCKQGSGFTNKIWNAFRLVKGWEISEKIEQPETAKMAINWYTARFQKTIREIEDHYSKYRISDALMSTYKLIWDDYCSWFLEMVKPGYGEPMDAKTYKAIIAILEENLKILHPFMPFVTEEIWQEITERTPEEALIIAKWPVEKEFDETIIKEFSHAAEVIAGVRKIRKDKNISFKNEIDFSVLNNENTSKTFDGVISKMGNISNLEYVTGSVDGALSFRVRSNEYFIPIAGAIDVEAEKEKIQEELNYTEGFLKSVDKKLSNERFVNNAPEKVVAIEKAKKADAEAKIEALKASLKSLS.

Residues 43 to 53 carry the 'HIGH' region motif; sequence PNVTGVLHMGH. Residues 534-538 carry the 'KMSKS' region motif; the sequence is KMSKS. Residue Lys537 coordinates ATP. The stretch at 847–876 forms a coiled coil; that stretch reads PEKVVAIEKAKKADAEAKIEALKASLKSLS.

The protein belongs to the class-I aminoacyl-tRNA synthetase family. ValS type 1 subfamily. Monomer.

It is found in the cytoplasm. It carries out the reaction tRNA(Val) + L-valine + ATP = L-valyl-tRNA(Val) + AMP + diphosphate. Catalyzes the attachment of valine to tRNA(Val). As ValRS can inadvertently accommodate and process structurally similar amino acids such as threonine, to avoid such errors, it has a 'posttransfer' editing activity that hydrolyzes mischarged Thr-tRNA(Val) in a tRNA-dependent manner. The chain is Valine--tRNA ligase from Christiangramia forsetii (strain DSM 17595 / CGMCC 1.15422 / KT0803) (Gramella forsetii).